A 511-amino-acid chain; its full sequence is MTNQESQSVKVVFVTRDETLQPEAPLPPVMVPTSLKRLGLSEIVNQLLDTETPVPLDFLIVKATAGDGGASILDEESASSSSVLLRPGASLESFLADNGLSSEVSLSIEYIRSVLPPSFLASFSNPDWVAAVDINARWTGDLKPVIASGSYDGVVRLWDHSGHVTGQLVGHNSAAKAVRWISNDQLVSGGSDRLLYLWNPDGKKYRRKEPGQVGKKELNYDSEEDSDEEMLDELPAASTVTPMAALHGHTAPINDLAVHAKTGKIISASADGSVGLWSTDYNDMPAIEPHTAAAGGLTSTSAQKRRKLANSGSGATGLGAARQRGPLAVMGGHSAAVSAVAFHHSDPTVAYSVSLDHTIKTWDLATAEAVQSNAGSPDPSVDTRSTSFSLLSLCTLPQGLIACGSSARHITLHDPRVTAQVATQAKLVGHTNFVSSLSRGPESNPFLLASGSHDGTVRIWDVRTTKSLHVIHRETLTENNAVFGVDWKQNLGIVSGGQDNKIQINNNPQSA.

The segment at 9–112 (VKVVFVTRDE…EVSLSIEYIR (104 aa)) is ubiquitin-like (UBL) domain. The segment at 122–511 (SFSNPDWVAA…IQINNNPQSA (390 aa)) is sufficient for interaction with ERB1 and association with 66S pre-ribosomes. WD repeat units follow at residues 124–168 (SNPD…TGQL), 170–208 (GHNS…YRRK), 248–287 (GHTA…MPAI), 332–372 (GHSA…AVQS), 383–423 (TRST…QVAT), 429–470 (GHTN…SLHV), and 477–511 (TENN…PQSA). The tract at residues 207–228 (RKEPGQVGKKELNYDSEEDSDE) is disordered. The span at 208–219 (KEPGQVGKKELN) shows a compositional bias: basic and acidic residues.

Belongs to the WD repeat WDR12/YTM1 family. Component of the NOP7 complex, composed of ERB1, NOP7 and YTM1. The complex is held together by ERB1, which interacts with NOP7 via its N-terminal domain and with YTM1 via a high-affinity interaction between the seven-bladed beta-propeller domains of the 2 proteins. The NOP7 complex associates with the 66S pre-ribosome. Interacts (via UBL domain) with MDN1 (via VWFA/MIDAS domain).

It is found in the nucleus. Its subcellular location is the nucleolus. The protein resides in the nucleoplasm. Component of the NOP7 complex, which is required for maturation of the 25S and 5.8S ribosomal RNAs and formation of the 60S ribosome. The chain is Ribosome biogenesis protein YTM1 from Yarrowia lipolytica (strain CLIB 122 / E 150) (Yeast).